A 367-amino-acid chain; its full sequence is Aminomethyltransferase (367 aa).

Belongs to the GcvT family. In terms of assembly, the glycine cleavage system is composed of four proteins: P, T, L and H.

It catalyses the reaction N(6)-[(R)-S(8)-aminomethyldihydrolipoyl]-L-lysyl-[protein] + (6S)-5,6,7,8-tetrahydrofolate = N(6)-[(R)-dihydrolipoyl]-L-lysyl-[protein] + (6R)-5,10-methylene-5,6,7,8-tetrahydrofolate + NH4(+). Its function is as follows. The glycine cleavage system catalyzes the degradation of glycine. The chain is Aminomethyltransferase from Lysinibacillus sphaericus (strain C3-41).